The chain runs to 237 residues: 1-(5-phosphoribosyl)-5-[(5-phosphoribosylamino)methylideneamino] imidazole-4-carboxamide isomerase (237 aa).

The active-site Proton acceptor is D8. The active-site Proton donor is the D129.

The protein belongs to the HisA/HisF family.

Its subcellular location is the cytoplasm. It carries out the reaction 1-(5-phospho-beta-D-ribosyl)-5-[(5-phospho-beta-D-ribosylamino)methylideneamino]imidazole-4-carboxamide = 5-[(5-phospho-1-deoxy-D-ribulos-1-ylimino)methylamino]-1-(5-phospho-beta-D-ribosyl)imidazole-4-carboxamide. It participates in amino-acid biosynthesis; L-histidine biosynthesis; L-histidine from 5-phospho-alpha-D-ribose 1-diphosphate: step 4/9. The protein is 1-(5-phosphoribosyl)-5-[(5-phosphoribosylamino)methylideneamino] imidazole-4-carboxamide isomerase of Clostridium botulinum (strain Alaska E43 / Type E3).